The chain runs to 329 residues: DNA-directed RNA polymerase subunit alpha (329 aa).

Residues 1–235 (MQGSVTEFLK…EQLDAFVDLR (235 aa)) are alpha N-terminal domain (alpha-NTD). Residues 249-329 (FDPILLRPVD…NWPPASIAED (81 aa)) are alpha C-terminal domain (alpha-CTD).

This sequence belongs to the RNA polymerase alpha chain family. Homodimer. The RNAP catalytic core consists of 2 alpha, 1 beta, 1 beta' and 1 omega subunit. When a sigma factor is associated with the core the holoenzyme is formed, which can initiate transcription.

It catalyses the reaction RNA(n) + a ribonucleoside 5'-triphosphate = RNA(n+1) + diphosphate. Functionally, DNA-dependent RNA polymerase catalyzes the transcription of DNA into RNA using the four ribonucleoside triphosphates as substrates. This is DNA-directed RNA polymerase subunit alpha from Photobacterium profundum (strain SS9).